A 338-amino-acid chain; its full sequence is Probable tRNA pseudouridine synthase B (338 aa).

Asp78 acts as the Nucleophile in catalysis. A PUA domain is found at 245–320 (LPKIILRDSA…IAASPIRVLM (76 aa)).

Belongs to the pseudouridine synthase TruB family. Type 2 subfamily.

The catalysed reaction is uridine(55) in tRNA = pseudouridine(55) in tRNA. Could be responsible for synthesis of pseudouridine from uracil-55 in the psi GC loop of transfer RNAs. In Methanosarcina acetivorans (strain ATCC 35395 / DSM 2834 / JCM 12185 / C2A), this protein is Probable tRNA pseudouridine synthase B.